Consider the following 233-residue polypeptide: Cytidylate kinase (233 aa).

15-23 (GPSGAGKST) contributes to the ATP binding site. Residues 183–201 (RRDEQDSGREHAPLRRADD) show a composition bias toward basic and acidic residues. The tract at residues 183 to 202 (RRDEQDSGREHAPLRRADDA) is disordered.

The protein belongs to the cytidylate kinase family. Type 1 subfamily.

It localises to the cytoplasm. It carries out the reaction CMP + ATP = CDP + ADP. The enzyme catalyses dCMP + ATP = dCDP + ADP. In Geobacter sulfurreducens (strain ATCC 51573 / DSM 12127 / PCA), this protein is Cytidylate kinase.